The primary structure comprises 159 residues: Small ribosomal subunit protein uS17 (159 aa).

Belongs to the universal ribosomal protein uS17 family.

The sequence is that of Small ribosomal subunit protein uS17 (RPS11) from Euphorbia esula (Leafy spurge).